The following is a 179-amino-acid chain: Large ribosomal subunit protein uL5 (179 aa).

The protein belongs to the universal ribosomal protein uL5 family. Part of the 50S ribosomal subunit; part of the 5S rRNA/L5/L18/L25 subcomplex. Contacts the 5S rRNA and the P site tRNA. Forms a bridge to the 30S subunit in the 70S ribosome.

Its function is as follows. This is one of the proteins that bind and probably mediate the attachment of the 5S RNA into the large ribosomal subunit, where it forms part of the central protuberance. In the 70S ribosome it contacts protein S13 of the 30S subunit (bridge B1b), connecting the 2 subunits; this bridge is implicated in subunit movement. Contacts the P site tRNA; the 5S rRNA and some of its associated proteins might help stabilize positioning of ribosome-bound tRNAs. This chain is Large ribosomal subunit protein uL5, found in Haemophilus influenzae (strain 86-028NP).